A 1849-amino-acid chain; its full sequence is Protein TANC1 (1849 aa).

At methionine 1 the chain carries N-acetylmethionine. 2 disordered regions span residues 1–47 and 59–109; these read MLKA…TTED and MSLP…FREG. The span at 8-21 shows a compositional bias: basic and acidic residues; it reads KSREGVKGSKKEAG. Polar residues predominate over residues 27–46; it reads ETPTLSSSGDSPVNSLSTTE. 6 positions are modified to phosphoserine: serine 60, serine 63, serine 64, serine 204, serine 267, and serine 455. Disordered stretches follow at residues 264–309 and 430–481; these read DNCS…PRPN and VASS…QRPR. The span at 451–468 shows a compositional bias: low complexity; it reads TPLLSPSSSTSALSAART. ANK repeat units lie at residues 886–918, 924–953, 957–986, 990–1019, 1030–1059, 1068–1097, 1101–1130, 1134–1163, 1167–1196, 1200–1229, and 1233–1262; these read EGLS…NVNY, NNAP…CLDG, NGMN…RVDH, KGQC…SAGP, ALQQ…EHEI, WGET…AVSR, RGVP…DVNP, QGRT…ALSS, EGLS…EIDQ, NGRT…VIEH, and SGMR…KLGN. TPR repeat units lie at residues 1279-1312, 1326-1359, and 1361-1393; these read LQKL…FPRE, VSLY…KPKS, and EAFY…CPTN. Over residues 1410–1421 the composition is skewed to low complexity; sequence LQRNQQQKQQAP. Disordered regions lie at residues 1410–1503, 1527–1605, 1635–1711, and 1812–1849; these read LQRN…ISKS, NQHL…GESG, QGGP…PRNT, and PHLY…ESNV. Serine 1429 and serine 1456 each carry phosphoserine. Over residues 1447-1456 the composition is skewed to acidic residues; it reads EEAEEEDTSS. Composition is skewed to polar residues over residues 1527 to 1546 and 1593 to 1603; these read NQHL…KVQV and PSQSLQLQRGE. A compositionally biased stretch (low complexity) spans 1649-1679; it reads SLSSSGSSGSPSSSVKMSSSTSSLTSSSSVS. Phosphoserine is present on residues serine 1658, serine 1666, and serine 1667.

The protein belongs to the TANC family. As to quaternary structure, interacts probably directly with DLG1, DLG4, HOMER1. Interacts with DLGAP1, INA, CAMK2A, GRIN2B and GRIA1. Interacts with TNIK and MINK1. Post-translationally, phosphorylated; by MINK1 and TNIK upon stimulation by RAP2A. As to expression, expressed in heart, lung, liver and kidney. Expressed in brain (at protein level).

The protein resides in the postsynaptic density. In terms of biological role, may be a scaffold component in the postsynaptic density. The protein is Protein TANC1 (Tanc1) of Rattus norvegicus (Rat).